Reading from the N-terminus, the 352-residue chain is Holliday junction branch migration complex subunit RuvB (352 aa).

Positions 4–185 (ADRLIAATGP…FGIVQRLEFY (182 aa)) are large ATPase domain (RuvB-L). ATP-binding positions include isoleucine 24, arginine 25, glycine 66, lysine 69, threonine 70, threonine 71, 132-134 (EDF), arginine 175, tyrosine 185, and arginine 222. Mg(2+) is bound at residue threonine 70. Residues 186–256 (STADLATIVS…IADLALNLLD (71 aa)) are small ATPAse domain (RuvB-S). Residues 259 to 352 (ERGFDHQDRR…VDEFLDAVDD (94 aa)) form a head domain (RuvB-H) region. The DNA site is built by arginine 295, arginine 314, and arginine 319.

It belongs to the RuvB family. In terms of assembly, homohexamer. Forms an RuvA(8)-RuvB(12)-Holliday junction (HJ) complex. HJ DNA is sandwiched between 2 RuvA tetramers; dsDNA enters through RuvA and exits via RuvB. An RuvB hexamer assembles on each DNA strand where it exits the tetramer. Each RuvB hexamer is contacted by two RuvA subunits (via domain III) on 2 adjacent RuvB subunits; this complex drives branch migration. In the full resolvosome a probable DNA-RuvA(4)-RuvB(12)-RuvC(2) complex forms which resolves the HJ.

The protein resides in the cytoplasm. It carries out the reaction ATP + H2O = ADP + phosphate + H(+). The RuvA-RuvB-RuvC complex processes Holliday junction (HJ) DNA during genetic recombination and DNA repair, while the RuvA-RuvB complex plays an important role in the rescue of blocked DNA replication forks via replication fork reversal (RFR). RuvA specifically binds to HJ cruciform DNA, conferring on it an open structure. The RuvB hexamer acts as an ATP-dependent pump, pulling dsDNA into and through the RuvAB complex. RuvB forms 2 homohexamers on either side of HJ DNA bound by 1 or 2 RuvA tetramers; 4 subunits per hexamer contact DNA at a time. Coordinated motions by a converter formed by DNA-disengaged RuvB subunits stimulates ATP hydrolysis and nucleotide exchange. Immobilization of the converter enables RuvB to convert the ATP-contained energy into a lever motion, pulling 2 nucleotides of DNA out of the RuvA tetramer per ATP hydrolyzed, thus driving DNA branch migration. The RuvB motors rotate together with the DNA substrate, which together with the progressing nucleotide cycle form the mechanistic basis for DNA recombination by continuous HJ branch migration. Branch migration allows RuvC to scan DNA until it finds its consensus sequence, where it cleaves and resolves cruciform DNA. In Pseudomonas fluorescens (strain ATCC BAA-477 / NRRL B-23932 / Pf-5), this protein is Holliday junction branch migration complex subunit RuvB.